The sequence spans 246 residues: UDP-N-acetyl-D-mannosaminuronic acid transferase (246 aa).

It belongs to the glycosyltransferase 26 family.

It carries out the reaction UDP-N-acetyl-alpha-D-mannosaminouronate + N-acetyl-alpha-D-glucosaminyl-di-trans,octa-cis-undecaprenyl diphosphate = beta-D-ManNAcA-(1-&gt;4)-alpha-D-GlcNAc-di-trans,octa-cis-undecaprenyl diphosphate + UDP + H(+). Its pathway is bacterial outer membrane biogenesis; enterobacterial common antigen biosynthesis. Its function is as follows. Catalyzes the synthesis of Und-PP-GlcNAc-ManNAcA (Lipid II), the second lipid-linked intermediate involved in enterobacterial common antigen (ECA) synthesis. The sequence is that of UDP-N-acetyl-D-mannosaminuronic acid transferase from Escherichia coli O127:H6 (strain E2348/69 / EPEC).